A 381-amino-acid polypeptide reads, in one-letter code: 5-amino-6-(D-ribitylamino)uracil--L-tyrosine 4-hydroxyphenyl transferase (381 aa).

The Radical SAM core domain maps to 59-306 (VTYVVNRNIN…TAVARIFLGN (248 aa)). The [4Fe-4S] cluster site is built by Cys73, Cys77, and Cys80.

The protein belongs to the radical SAM superfamily. CofH family. Consists of two subunits, CofG and CofH. Requires [4Fe-4S] cluster as cofactor.

The catalysed reaction is 5-amino-6-(D-ribitylamino)uracil + L-tyrosine + S-adenosyl-L-methionine = 5-amino-5-(4-hydroxybenzyl)-6-(D-ribitylimino)-5,6-dihydrouracil + 2-iminoacetate + 5'-deoxyadenosine + L-methionine + H(+). It functions in the pathway cofactor biosynthesis; coenzyme F0 biosynthesis. Functionally, catalyzes the radical-mediated synthesis of 5-amino-5-(4-hydroxybenzyl)-6-(D-ribitylimino)-5,6-dihydrouracil from 5-amino-6-(D-ribitylamino)uracil and L-tyrosine. In Cyanothece sp. (strain PCC 7425 / ATCC 29141), this protein is 5-amino-6-(D-ribitylamino)uracil--L-tyrosine 4-hydroxyphenyl transferase.